The sequence spans 1064 residues: Bifunctional cytochrome P450/NADPH--P450 reductase ascE (1064 aa).

A cytochrome P450 region spans residues 1-484 (MTELIPGPKG…LHGGAKKGSK (484 aa)). C411 contributes to the heme binding site. The NADPH-P-450 reductase stretch occupies residues 485 to 1064 (IDGPSSGASL…ANRYVTEIFA (580 aa)). A Flavodoxin-like domain is found at 504–644 (MTILYGSDSG…DFERWQDDQL (141 aa)). Residues 510–514 (SDSGT) and 588–620 (VYGC…KRIA) each bind FMN. An FAD-binding FR-type domain is found at 676–905 (VDADEATVQS…KPALRLFHPP (230 aa)).

In the N-terminal section; belongs to the cytochrome P450 family. FAD serves as cofactor. It depends on FMN as a cofactor. The cofactor is heme.

It catalyses the reaction ilicicolin A + NADPH + O2 + H(+) = ilicicolin A epoxide + NADP(+) + H2O. It participates in secondary metabolite biosynthesis; terpenoid biosynthesis. Functionally, bifunctional cytochrome P450/NADPH--P450 reductase; part of the asc-1 gene cluster that mediates the biosynthesis both ascochlorin and ascofuranone, a strong inhibitor of cyanide-insensitive alternative oxidases and a promising drug candidate against African trypanosomiasis. The first step in the pathway is performed by the non-reducing polyketide synthase ascC that produces orsellinic acid by condensing acetyl-CoA with 3 malonyl-CoA units. Orsellinic acid is then prenylated by the prenyltransferase ascA to yield ilicicolinic acid B. Ilicicolinic acid B is further reduced to ilicicolin B by the reductase ascB. The halogenase ascD then chlorinates ilicicolin B to produce ilicicolin A which is converted to ilicicolin A epoxide by the cytochrome P450 monooxygenase ascE that catalyzes stereoselective epoxidation of the terminal double bond of the prenyl group. Ilicicolin A epoxide is the last common precursor for the biosynthesis of ascofuranone and ascochlorin. The terpene cyclase ascF produces a monocyclic terpene, and the cyclization reaction is proposed to be initiated by protonation of the terminal epoxide of ilicicolin A epoxide to generate a monocyclic tertiarycation, which is followed by a series of hydride and methyl shifts with abstraction of proton, leading to the formation of the (14S,15R,19R)-trimethylcyclohexanone ring structure of ilicicolin C, which is finally reduced to ascochlorin by the dehydrogenase ascG. On the other hand, ilicicolin A epoxide is hydroxylated by the cytochrome P450 monooxygenase ascH, and the resultant product is cyclized by the terpene cyclase ascI to ascofuranol via protonation-initiated epoxide ring opening, which facilitates the 6-endo-tet cyclization to form the tetrahy-drofuran ring. Finally, ascofuranol is oxidized into ascofuranone by ascJ. The protein is Bifunctional cytochrome P450/NADPH--P450 reductase ascE of Acremonium egyptiacum (Oospora egyptiaca).